Consider the following 259-residue polypeptide: Sesquipedalian-2 (259 aa).

Positions Pro17–Phe121 constitute a PH domain. Residues Met124–Ser149 adopt a coiled-coil conformation. Positions Cys223–Ile235 match the F&amp;H motif.

The protein belongs to the sesquipedalian family. Forms homodimers and heterodimers with PHETA1. Interacts with OCRL and INPP5B.

It is found in the early endosome. The protein resides in the recycling endosome. It localises to the golgi apparatus. The protein localises to the trans-Golgi network. Its subcellular location is the cytoplasmic vesicle. It is found in the clathrin-coated vesicle. Functionally, plays a role in endocytic trafficking. Required for receptor recycling from endosomes, both to the trans-Golgi network and the plasma membrane. This Homo sapiens (Human) protein is Sesquipedalian-2.